The sequence spans 1364 residues: Serine protease EatA (1364 aa).

The signal sequence occupies residues 1–56 (MNKVFSLKYSFLAKGFIAVSELARRVSVKGKLKSASSIIISPITIAIVSYAPPSLA). Residues 57–307 (ATVNADISYQ…VVTTQDFLHQ (251 aa)) enclose the Peptidase S6 domain. Residues histidine 134, aspartate 162, and serine 267 each act as charge relay system in the active site. One can recognise an Autotransporter domain in the interval 1098–1364 (DSQGDAGGWA…SINANFRYYF (267 aa)).

In terms of processing, cleaved to release the mature protein from the outer membrane.

The protein resides in the periplasm. The protein localises to the secreted. It localises to the cell surface. Its subcellular location is the cell outer membrane. With respect to regulation, inhibited by phenylmethylsulfonyl fluoride. Its function is as follows. Autotransporter serine protease probably involved in virulence. This Escherichia coli O78:H11 (strain H10407 / ETEC) protein is Serine protease EatA (eatA).